A 483-amino-acid chain; its full sequence is Cobyric acid synthase (483 aa).

In terms of domain architecture, GATase cobBQ-type spans 248 to 434 (ALRVVVPVLP…LHGLFEQPSA (187 aa)). The active-site Nucleophile is the Cys-329. The active site involves His-426.

It belongs to the CobB/CobQ family. CobQ subfamily.

It participates in cofactor biosynthesis; adenosylcobalamin biosynthesis. Functionally, catalyzes amidations at positions B, D, E, and G on adenosylcobyrinic A,C-diamide. NH(2) groups are provided by glutamine, and one molecule of ATP is hydrogenolyzed for each amidation. In Ectopseudomonas mendocina (strain ymp) (Pseudomonas mendocina), this protein is Cobyric acid synthase.